A 688-amino-acid polypeptide reads, in one-letter code: Protein adenylyltransferase SelO, mitochondrial (688 aa).

Residues 1–23 (MGEKRTIIKALKNSAASHFIKKL) constitute a mitochondrion transit peptide. Residues Gly132, Gly134, Arg135, Lys156, Asp168, Gly169, Arg220, and Arg227 each contribute to the ATP site. Residue Asp338 is the Proton acceptor of the active site. Mg(2+)-binding residues include Asn339 and Asp348. Asp348 serves as a coordination point for ATP.

It belongs to the SELO family. The cofactor is Mg(2+). In terms of processing, forms probably one or more intrachain disulfide bridges.

Its subcellular location is the mitochondrion. The enzyme catalyses L-tyrosyl-[protein] + ATP = O-(5'-adenylyl)-L-tyrosyl-[protein] + diphosphate. Catalyzes the transfer of adenosine 5'-monophosphate (AMP) to Tyr residues of target mitochondrial proteins (AMPylation). Involved in redox homeostasis by regulating the cellular response to oxidative stress. Regulates protein S-glutathionylation levels possibly by AMPylation of deglutathionylation enzymes such as glutaredoxins. This chain is Protein adenylyltransferase SelO, mitochondrial, found in Saccharomyces cerevisiae (strain ATCC 204508 / S288c) (Baker's yeast).